Reading from the N-terminus, the 82-residue chain is MSPLIAAASVVAAGLAVGLASIGPGIGQGTAAGQAVGGIARQPEAEGKIRGTLLLSLAFMEALTIYGLVVALALLFANPFVS.

The next 2 membrane-spanning stretches (helical) occupy residues 3-23 and 57-77; these read PLIA…ASIG and LAFM…LLFA.

The protein belongs to the ATPase C chain family. As to quaternary structure, F-type ATPases have 2 components, F(1) - the catalytic core - and F(0) - the membrane proton channel. F(1) has five subunits: alpha(3), beta(3), gamma(1), delta(1), epsilon(1). F(0) has four main subunits: a(1), b(1), b'(1) and c(10-14). The alpha and beta chains form an alternating ring which encloses part of the gamma chain. F(1) is attached to F(0) by a central stalk formed by the gamma and epsilon chains, while a peripheral stalk is formed by the delta, b and b' chains.

The protein resides in the plastid. It is found in the chloroplast thylakoid membrane. Functionally, f(1)F(0) ATP synthase produces ATP from ADP in the presence of a proton or sodium gradient. F-type ATPases consist of two structural domains, F(1) containing the extramembraneous catalytic core and F(0) containing the membrane proton channel, linked together by a central stalk and a peripheral stalk. During catalysis, ATP synthesis in the catalytic domain of F(1) is coupled via a rotary mechanism of the central stalk subunits to proton translocation. In terms of biological role, key component of the F(0) channel; it plays a direct role in translocation across the membrane. A homomeric c-ring of between 10-14 subunits forms the central stalk rotor element with the F(1) delta and epsilon subunits. This Nephroselmis olivacea (Green alga) protein is ATP synthase subunit c, chloroplastic.